A 309-amino-acid chain; its full sequence is HPr kinase/phosphorylase (309 aa).

Active-site residues include histidine 139 and lysine 160. 154 to 161 (GESGIGKS) provides a ligand contact to ATP. Serine 161 contacts Mg(2+). The Proton acceptor; for phosphorylation activity. Proton donor; for dephosphorylation activity role is filled by aspartate 178. Residues 202-211 (IELRGIGIID) are important for the catalytic mechanism of both phosphorylation and dephosphorylation. Glutamate 203 provides a ligand contact to Mg(2+). The active site involves arginine 244. The segment at 265 to 270 (PIRPGR) is important for the catalytic mechanism of dephosphorylation.

The protein belongs to the HPrK/P family. In terms of assembly, homohexamer. The cofactor is Mg(2+).

It catalyses the reaction [HPr protein]-L-serine + ATP = [HPr protein]-O-phospho-L-serine + ADP + H(+). It carries out the reaction [HPr protein]-O-phospho-L-serine + phosphate + H(+) = [HPr protein]-L-serine + diphosphate. Catalyzes the ATP- as well as the pyrophosphate-dependent phosphorylation of a specific serine residue in HPr, a phosphocarrier protein of the phosphoenolpyruvate-dependent sugar phosphotransferase system (PTS). HprK/P also catalyzes the pyrophosphate-producing, inorganic phosphate-dependent dephosphorylation (phosphorolysis) of seryl-phosphorylated HPr (P-Ser-HPr). The two antagonistic activities of HprK/P are regulated by several intracellular metabolites, which change their concentration in response to the absence or presence of rapidly metabolisable carbon sources (glucose, fructose, etc.) in the growth medium. Therefore, by controlling the phosphorylation state of HPr, HPrK/P is a sensor enzyme that plays a major role in the regulation of carbon metabolism and sugar transport: it mediates carbon catabolite repression (CCR), and regulates PTS-catalyzed carbohydrate uptake and inducer exclusion. In Lachnoclostridium phytofermentans (strain ATCC 700394 / DSM 18823 / ISDg) (Clostridium phytofermentans), this protein is HPr kinase/phosphorylase.